We begin with the raw amino-acid sequence, 194 residues long: UPF0301 protein FTM_0963 (194 aa).

This sequence belongs to the UPF0301 (AlgH) family.

The chain is UPF0301 protein FTM_0963 from Francisella tularensis subsp. mediasiatica (strain FSC147).